The chain runs to 373 residues: MASYGFPLTASSLVDWTSLTFSPIEVNGHIQCTYSPEVAEWGAPHFVKDPYLRVHGLAPALNYGQQIFEGMKAFRTPTGSIRLFRPKMNAVRFAHSASFVAIPPVPEALFLRAVHLAVGLNSEFVPPYDSRGSALYIRPIAFASSATVNLAPADHFTFCVFVMPVAPLSTGAGQGLRALVVEDVDRAAPKGTGSAKVGGNYAPIVTTMQRAKADGYGLTLHLDSATHTMVDEFSASGFIGVRVDAGKTTMVVPDSPTILRSITVDSMCRIAESFGWQVQRRAVSFTELAELSEAFAVGTAFILTPVRAITRPCTHTCIEYTADYRSSASAYTRLLETLQGIQQGWLDDAWGWTEEVQDPSSDEFITDTVQARR.

Arginine 92 serves as a coordination point for pyridoxal 5'-phosphate. An N6-(pyridoxal phosphate)lysine modification is found at lysine 196. Glutamate 232 contributes to the pyridoxal 5'-phosphate binding site.

The protein belongs to the class-IV pyridoxal-phosphate-dependent aminotransferase family. Pyridoxal 5'-phosphate serves as cofactor.

It participates in mycotoxin biosynthesis. Its function is as follows. Transaminase; part of the gene clusters that mediate the biosynthesis of AM-toxins, host-selective toxins (HSTs) causing Alternaria blotch on apple, a worldwide distributed disease. AM-toxins are cyclic depsipeptides containing the 3 residues 2-hydroxy-isovaleric acid (2-HIV), dehydroalanine, L-alanine which are common for all 3 AM-toxins I to III. The fourth precursor is L-alpha-amino-methoxyphenyl-valeric acid (L-Amv) for AM-toxin I, L-alpha-amino-phenyl-valeric acid (L-Apv) for AM-toxin II, and L-alpha-amino-hydroxyphenyl-valeric acid (L-Ahv) for AM-toxin III. AM-toxins have two target sites for affecting susceptible apple cells; they cause invagination of the plasma membrane and electrolyte loss and chloroplast disorganization. The non-ribosomal peptide synthetase AMT1 contains 4 catalytic modules and is responsible for activation of each residue in AM-toxin. The aldo-keto reductase AMT2 catalyzes the conversion of 2-keto-isovaleric acid (2-KIV) to 2-hydroxy-isovaleric acid (2-HIV), one of the precursor residues incorporated by AMT1 during AM-toxin biosynthesis, by reduction of its ketone to an alcohol. The cytochrome P450 monooxygenase AMT3 and the thioesterase AMT4 are also important for AM-toxin production, but their exact function within the AM-toxin biosynthesis are not known yet. Up to 21 proteins (including AMT1 to AMT4) are predicted to be involved in AM-toxin biosynthesis since their expression is highly up-regulated in AM-toxin-producing cultures. The polypeptide is Transaminase AMT5 (Alternaria alternata (Alternaria rot fungus)).